We begin with the raw amino-acid sequence, 88 residues long: Small ribosomal subunit protein uS17 (88 aa).

The protein belongs to the universal ribosomal protein uS17 family. Part of the 30S ribosomal subunit.

In terms of biological role, one of the primary rRNA binding proteins, it binds specifically to the 5'-end of 16S ribosomal RNA. This is Small ribosomal subunit protein uS17 from Nitratidesulfovibrio vulgaris (strain DSM 19637 / Miyazaki F) (Desulfovibrio vulgaris).